The following is a 179-amino-acid chain: Transcription factor E (179 aa).

Residues methionine 1–alanine 102 form the HTH TFE/IIEalpha-type domain.

This sequence belongs to the TFE family. As to quaternary structure, monomer. Interaction with RNA polymerase subunits RpoF and RpoE is necessary for Tfe stimulatory transcription activity. Able to interact with Tbp and RNA polymerase in the absence of DNA promoter. Interacts both with the preinitiation and elongation complexes.

Functionally, transcription factor that plays a role in the activation of archaeal genes transcribed by RNA polymerase. Facilitates transcription initiation by enhancing TATA-box recognition by TATA-box-binding protein (Tbp), and transcription factor B (Tfb) and RNA polymerase recruitment. Not absolutely required for transcription in vitro, but particularly important in cases where Tbp or Tfb function is not optimal. It dynamically alters the nucleic acid-binding properties of RNA polymerases by stabilizing the initiation complex and destabilizing elongation complexes. Seems to translocate with the RNA polymerase following initiation and acts by binding to the non template strand of the transcription bubble in elongation complexes. This chain is Transcription factor E, found in Methanosphaera stadtmanae (strain ATCC 43021 / DSM 3091 / JCM 11832 / MCB-3).